The sequence spans 446 residues: Probable E3 ubiquitin-protein ligase XBOS31 (446 aa).

ANK repeat units follow at residues 46-75, 79-108, 113-142, 160-189, and 197-227; these read DRFT…DVDV, KKQT…NVLT, RART…QAQG, RGAT…IVSA, and PGST…RLQR. An RING-type zinc finger spans residues 317 to 366; sequence CNICFEQACSMEVKECGHQMCAACTLAICCHSKPNPKTLLLHPPACPFCR. The tract at residues 376–401 is disordered; it reads TTNSNKTNSRRRSRSRSSSFKGGLSS.

The catalysed reaction is S-ubiquitinyl-[E2 ubiquitin-conjugating enzyme]-L-cysteine + [acceptor protein]-L-lysine = [E2 ubiquitin-conjugating enzyme]-L-cysteine + N(6)-ubiquitinyl-[acceptor protein]-L-lysine.. Its pathway is protein modification; protein ubiquitination. This Oryza sativa subsp. japonica (Rice) protein is Probable E3 ubiquitin-protein ligase XBOS31 (XBOS31).